A 556-amino-acid chain; its full sequence is MEKSMIKLKSTVIVVLFALLYLLPLNGRWLWSPDETRYAEISREMLQRGDWIVPHLLDIRYFEKPVAGYWLNNMSQWLLGHTNFSVRFASVFSTALSALLVFWLAMMLWKNQRTALLAATIYLTSLLVYGIGTYSVLDPMVTLWMTAALFSHAMILRAKLTRERLLAWGLMGLACGMGFMTKGFLALALPVISVLPVALAQKRIKELLLFGPLAIVVAVLLSAPWALAVHAREADYWHYFFWIEHIQRFAEDDAQHKAPFWYYLPFLIVGTFPWLALLPGALRSGWTERKVNPERFFLLCWMVMPLLFFSIAKGKLLTYILPCFAPLALLMAAWISGLAPVVRERLLRINSWLNIVFGGVLGLAVAALGLGIIVPHFYQPGEGLTIISGIVCFIGWIAFAAVSLRKQQTWGYLVAGCPLFLALLVGGSIPASVVDSKNPQTFIRSHQPLLEDSRYVLSDEVGLAAGLAWELKRSDITLFKARGELNYGLDYADAADRFVDEGAFPAWLADKRRSGNVALVLKTDRDSDDEYRNLPAPNQLRKSHRYVLLFYKQVVP.

10 helical membrane passes run 88-108, 116-136, 179-199, 207-227, 258-278, 296-316, 319-339, 355-375, 384-404, and 410-430; these read FASV…AMML, LLAA…TYSV, FMTK…PVAL, LLLF…PWAL, APFW…LALL, FFLL…KGKL, YILP…SGLA, IVFG…IIVP, LTII…AVSL, and WGYL…GSIP.

It belongs to the glycosyltransferase 83 family.

Its subcellular location is the cell inner membrane. The enzyme catalyses 4-amino-4-deoxy-alpha-L-arabinopyranosyl di-trans,octa-cis-undecaprenyl phosphate + lipid IVA = lipid IIA + di-trans,octa-cis-undecaprenyl phosphate.. The protein operates within lipopolysaccharide metabolism; 4-amino-4-deoxy-beta-L-arabinose-lipid A biosynthesis. In terms of biological role, catalyzes the transfer of the L-Ara4N moiety of the glycolipid undecaprenyl phosphate-alpha-L-Ara4N to lipid A. The modified arabinose is attached to lipid A and is required for resistance to polymyxin and cationic antimicrobial peptides. The protein is Undecaprenyl phosphate-alpha-4-amino-4-deoxy-L-arabinose arabinosyl transferase of Pectobacterium atrosepticum (strain SCRI 1043 / ATCC BAA-672) (Erwinia carotovora subsp. atroseptica).